A 406-amino-acid polypeptide reads, in one-letter code: MLFHSLSGPEVHGVIDEMDRRAKSEAPAISSAIDRGDTETTMPSISSDRAALCAGCGGKISDRYYLLAVDKQWHMRCLKCCECKLNLESELTCFSKDGSIYCKEDYYRRFSVQRCARCHLGISASEMVMRARDLVYHLNCFTCTTCNKMLTTGDHFGMKDSLVYCRLHFEALLQGEYPAHFNHADVAAAAAAAAAAKSAGLGAAGANPLGLPYYNGVGTVQKGRPRKRKSPGPGADLAAYNAALSCNENDAEHLDRDQPYPSSQKTKRMRTSFKHHQLRTMKSYFAINHNPDAKDLKQLAQKTGLTKRVLQVWFQNARAKFRRNLLRQENTGVDKSTDAALQTGTPSGPASELSNASLSPSSTPTTLTDLTSPTLPTVTSVLTSVPGNLEGHEPHSPSQTTLTNLF.

LIM zinc-binding domains lie at 53 to 105 (CAGC…CKED) and 115 to 168 (CARC…CRLH). The tract at residues 250-270 (DAEHLDRDQPYPSSQKTKRMR) is disordered. The homeobox DNA-binding region spans 266–325 (TKRMRTSFKHHQLRTMKSYFAINHNPDAKDLKQLAQKTGLTKRVLQVWFQNARAKFRRNL). Residues 307 to 323 (KRVLQVWFQNARAKFRR) carry the Nuclear localization signal motif. Residues 328–356 (QENTGVDKSTDAALQTGTPSGPASELSNA) show a composition bias toward polar residues. 2 disordered regions span residues 328–374 (QENT…TSPT) and 387–406 (GNLE…TNLF). A compositionally biased stretch (low complexity) spans 357 to 374 (SLSPSSTPTTLTDLTSPT). Residues 396–406 (SPSQTTLTNLF) show a composition bias toward polar residues.

In terms of assembly, interacts (via LIM domains) with CITED2. Interacts with POU4F2.

It localises to the nucleus. Its function is as follows. Acts as a transcriptional activator. Stimulates the promoter of the alpha-glycoprotein gene. Transcriptional regulatory protein involved in the control of cell differentiation in developing lymphoid and neural cell types. This chain is LIM/homeobox protein Lhx2 (LHX2), found in Homo sapiens (Human).